We begin with the raw amino-acid sequence, 245 residues long: Thiopurine S-methyltransferase (245 aa).

29–40 is an S-adenosyl-L-methionine binding site; sequence WQEKWVSRRIGF. Residue Phe40 participates in substrate binding. Lys58 carries the N6-acetyllysine modification. Residues Leu69, Glu90, and Arg152 each contribute to the S-adenosyl-L-methionine site.

This sequence belongs to the class I-like SAM-binding methyltransferase superfamily. TPMT family. Monomer.

It is found in the cytoplasm. The enzyme catalyses S-adenosyl-L-methionine + a thiopurine = S-adenosyl-L-homocysteine + a thiopurine S-methylether.. This chain is Thiopurine S-methyltransferase (TPMT), found in Lycaon pictus (African wild dog).